Reading from the N-terminus, the 251-residue chain is DNA repair protein RecO (251 aa).

It belongs to the RecO family.

Its function is as follows. Involved in DNA repair and RecF pathway recombination. This is DNA repair protein RecO from Macrococcus caseolyticus (strain JCSC5402) (Macrococcoides caseolyticum).